Reading from the N-terminus, the 618-residue chain is Serine/threonine-protein kinase pkn1 (618 aa).

The Protein kinase domain occupies 15 to 381; that stretch reads YKILCYLRKG…KEEVKPQPLF (367 aa). ATP-binding positions include 21–29 and Lys44; that span reads LRKGLWCQD.

It belongs to the protein kinase superfamily. Ser/Thr protein kinase family. Autophosphorylated on serine and threonine residues.

The catalysed reaction is L-seryl-[protein] + ATP = O-phospho-L-seryl-[protein] + ADP + H(+). It catalyses the reaction L-threonyl-[protein] + ATP = O-phospho-L-threonyl-[protein] + ADP + H(+). Together with the serine/threonine kinase PknD, may play a role in the specific interactions with host proteins during intracellular growth. The polypeptide is Serine/threonine-protein kinase pkn1 (pkn1) (Chlamydia caviae (strain ATCC VR-813 / DSM 19441 / 03DC25 / GPIC) (Chlamydophila caviae)).